We begin with the raw amino-acid sequence, 106 residues long: UPF0449 protein C19orf25 homolog (106 aa).

Belongs to the UPF0449 family.

The sequence is that of UPF0449 protein C19orf25 homolog from Xenopus tropicalis (Western clawed frog).